A 161-amino-acid polypeptide reads, in one-letter code: UPF0506 protein SJCHGC02965 (161 aa).

The signal sequence occupies residues 1–13; sequence QLLILCLVTVINS. Asn-15, Asn-19, Asn-31, Asn-43, Asn-47, Asn-59, Asn-63, Asn-75, and Asn-121 each carry an N-linked (GlcNAc...) asparagine glycan. 3 disulfides stabilise this stretch: Cys-127–Cys-141, Cys-134–Cys-145, and Cys-140–Cys-150.

Belongs to the UPF0506 family.

The protein resides in the secreted. In Schistosoma japonicum (Blood fluke), this protein is UPF0506 protein SJCHGC02965.